Here is a 370-residue protein sequence, read N- to C-terminus: GTPase Obg (370 aa).

The region spanning 1 to 159 is the Obg domain; that stretch reads MKFIDEARIE…RMVRLELKVL (159 aa). Residues 127 to 147 are disordered; it reads NLHFKSSTNRAPRQKTDGKPG. The OBG-type G domain occupies 160–334; the sequence is ADVGLLGMPN…LCYAVYDYLA (175 aa). GTP-binding positions include 166–173, 191–195, 213–216, 284–287, and 315–317; these read GMPNAGKS, FTTLA, DIPG, NKLD, and SAL. Residues S173 and T193 each contribute to the Mg(2+) site.

This sequence belongs to the TRAFAC class OBG-HflX-like GTPase superfamily. OBG GTPase family. As to quaternary structure, monomer. Mg(2+) serves as cofactor.

It localises to the cytoplasm. In terms of biological role, an essential GTPase which binds GTP, GDP and possibly (p)ppGpp with moderate affinity, with high nucleotide exchange rates and a fairly low GTP hydrolysis rate. Plays a role in control of the cell cycle, stress response, ribosome biogenesis and in those bacteria that undergo differentiation, in morphogenesis control. This chain is GTPase Obg, found in Paraburkholderia phymatum (strain DSM 17167 / CIP 108236 / LMG 21445 / STM815) (Burkholderia phymatum).